A 609-amino-acid polypeptide reads, in one-letter code: Autophagy-related protein 22-1 (609 aa).

Transmembrane regions (helical) follow at residues 95-115 (YYAG…GVEI), 117-137 (TASF…ILII), 151-171 (LLLV…LGVV), and 176-196 (MVGA…FVLL). Positions 214-238 (AREPPPALDGSRAQEGHSDTTNDID) are disordered. Basic and acidic residues predominate over residues 225–238 (RAQEGHSDTTNDID). Asn-244 carries N-linked (GlcNAc...) asparagine glycosylation. A helical membrane pass occupies residues 287 to 307 (IGIGYIGAIILQIVCILVVIA). An N-linked (GlcNAc...) asparagine glycan is attached at Asn-309. 3 helical membrane-spanning segments follow: residues 317–337 (LVLF…ALWL), 381–401 (ILLF…VSGT), and 415–435 (AALG…AFSW). N-linked (GlcNAc...) asparagine glycosylation is present at Asn-443. Transmembrane regions (helical) follow at residues 450–470 (IIAC…GFIP), 487–509 (FPLG…SFFG), 522–542 (ALYA…VGII), and 552–572 (AFVF…LVDV).

This sequence belongs to the ATG22 family.

The protein resides in the vacuole membrane. Its function is as follows. Vacuolar effluxer which mediate the efflux of amino acids resulting from autophagic degradation. The release of autophagic amino acids allows the maintenance of protein synthesis and viability during nitrogen starvation. The polypeptide is Autophagy-related protein 22-1 (atg22-1) (Neosartorya fischeri (strain ATCC 1020 / DSM 3700 / CBS 544.65 / FGSC A1164 / JCM 1740 / NRRL 181 / WB 181) (Aspergillus fischerianus)).